The sequence spans 518 residues: Protein FAM98A (518 aa).

Disordered regions lie at residues 297–415 (VLMG…GHSS) and 434–518 (GSGY…HYTS). Residues 302 to 311 (VPDRGGRPNE) are compositionally biased toward basic and acidic residues. Gly residues-rich tracts occupy residues 349-364 (GGRG…GGRG), 383-396 (WTDG…GYQD), and 405-415 (QPGGYHGGHSS). The span at 447–459 (RYQDGGHHGDRGG) shows a compositional bias: basic and acidic residues. The segment covering 460–484 (GRGGRGGRGGRGGRAGQGGGWGGRG) has biased composition (gly residues). Positions 488–504 (YHQGGQFEQHFQHGGYQ) are enriched in low complexity. The span at 505 to 518 (YNHSGFGQGRHYTS) shows a compositional bias: polar residues.

It belongs to the FAM98 family. In terms of assembly, interacts (via N- and C-terminus) with DDX1. Interacts (via N- and C-terminus) with C14orf166. Interacts with FAM98B. Interacts with PLEKHM1 (via N- and C-terminus). As to expression, expressed strongly in colorectal cancer cells. Expressed strongly in colorectal cancer tissues compared to wild-type colon samples (at protein level). Expressed strongly in colorectal cancer tissues compared to wild-type colon samples.

Its function is as follows. Positively stimulates PRMT1-induced protein arginine methylation. Involved in skeletal homeostasis. Positively regulates lysosome peripheral distribution and ruffled border formation in osteoclasts. In Homo sapiens (Human), this protein is Protein FAM98A.